Here is a 468-residue protein sequence, read N- to C-terminus: Argininosuccinate lyase (468 aa).

It belongs to the lyase 1 family. Argininosuccinate lyase subfamily.

It is found in the cytoplasm. It carries out the reaction 2-(N(omega)-L-arginino)succinate = fumarate + L-arginine. Its pathway is amino-acid biosynthesis; L-arginine biosynthesis; L-arginine from L-ornithine and carbamoyl phosphate: step 3/3. This Alkalilimnicola ehrlichii (strain ATCC BAA-1101 / DSM 17681 / MLHE-1) protein is Argininosuccinate lyase.